Reading from the N-terminus, the 828-residue chain is Glycerol-3-phosphate acyltransferase (828 aa).

An HXXXXD motif motif is present at residues 310–315 (HRSHID).

The protein belongs to the GPAT/DAPAT family.

It is found in the cell inner membrane. The catalysed reaction is sn-glycerol 3-phosphate + an acyl-CoA = a 1-acyl-sn-glycero-3-phosphate + CoA. The protein operates within phospholipid metabolism; CDP-diacylglycerol biosynthesis; CDP-diacylglycerol from sn-glycerol 3-phosphate: step 1/3. This chain is Glycerol-3-phosphate acyltransferase, found in Pseudomonas putida (strain ATCC 47054 / DSM 6125 / CFBP 8728 / NCIMB 11950 / KT2440).